Consider the following 215-residue polypeptide: Ribose-5-phosphate isomerase A (215 aa).

Residues 26-29 (TGST), 79-82 (DGAD), and 92-95 (KGGG) each bind substrate. Glu-101 (proton acceptor) is an active-site residue. Substrate is bound at residue Lys-119.

The protein belongs to the ribose 5-phosphate isomerase family. As to quaternary structure, homodimer.

It catalyses the reaction aldehydo-D-ribose 5-phosphate = D-ribulose 5-phosphate. The protein operates within carbohydrate degradation; pentose phosphate pathway; D-ribose 5-phosphate from D-ribulose 5-phosphate (non-oxidative stage): step 1/1. Functionally, catalyzes the reversible conversion of ribose-5-phosphate to ribulose 5-phosphate. In Stenotrophomonas maltophilia (strain K279a), this protein is Ribose-5-phosphate isomerase A.